Consider the following 111-residue polypeptide: MKTLLLAVAVVAFVCLGSADQLGLGRQQIDWGKGQAKGPPYTLCFECNRETCSNCFKDNRCPPYHRTCYTLYRPDGNGEMKWAVKGCAKTCPTAQPGESVQCCNTPKCNDY.

A signal peptide spans 1–19; it reads MKTLLLAVAVVAFVCLGSA. Positions 20–34 are excised as a propeptide; sequence DQLGLGRQQIDWGKG. Q35 is subject to Pyrrolidone carboxylic acid. 5 disulfides stabilise this stretch: C44–C68, C47–C55, C61–C87, C91–C102, and C103–C108.

This sequence belongs to the three-finger toxin family. Ancestral subfamily. Boigatoxin sub-subfamily. As to quaternary structure, heterodimer of A and B chains; disulfide-linked. In terms of tissue distribution, expressed by the venom gland.

The protein resides in the secreted. This bird and reptile-specific postsynaptic neurotoxin inhibits the chick muscle alpha-1-beta-1-gamma-delta (CHRNA1-CHRNB1-CHRNG-CHRND) nicotinic acetylcholine receptor (nAChR) 100-fold more compared with the mouse receptor. In vivo, produces rapid flaccid paralysis, dyspnea and increased respiratory rate in geckos. At sublethal doses geckos were immobilized for up to three days and then recovered. Chicks injected with lethal doses showed rapid onset of inactivity, dyspnea and neck droop, and no extended paralysis with survival was seen. This Boiga irregularis (Brown tree snake) protein is Irditoxin subunit B.